We begin with the raw amino-acid sequence, 194 residues long: PPE family protein PPE41 (194 aa).

The protein belongs to the mycobacterial PPE family. Forms a heterodimer with PE25. The dimer forms a 1:1:1 heterotrimeric complex with EspG5. PPE41 interacts directly with EspG5.

It localises to the secreted. The protein localises to the cell surface. In terms of biological role, the PE25/PPE41 dimer induces both a strong humoral and cellular immune response. The dimer induces necrosis, but not apoptosis, in mouse macrophage cells. It also induces activation and maturation of mouse dendritic cells and drives Th2-biased immune responses. This Mycobacterium tuberculosis (strain ATCC 25618 / H37Rv) protein is PPE family protein PPE41.